The sequence spans 548 residues: MTSVTDRSAHSAERSTEHTIDIHTTAGKLAELHKRREESLHPVGEDAVEKVHAKGKLTARERIYALLDEDSFVELDALAKHRSTNFNLGEKRPLGDGVVTGYGTIDGRDVCIFSQDATVFGGSLGEVYGEKIVKVQELAIKTGRPLIGINDGAGARIQEGVVSLGLYSRIFRNNILASGVIPQISLIMGAAAGGHVYSPALTDFVIMVDQTSQMFITGPDVIKTVTGEEVTMEELGGAHTHMAKSGTAHYAASGEQDAFDYVRELLSYLPPNNSTDAPRYQAAAPTGPIEENLTDEDLELDTLIPDSPNQPYDMHEVITRLLDDEFLEIQAGYAQNIVVGFGRIGGRPVGIVANQPTHFAGCLDINASEKAARFVRTCDCFNIPIVMLVDVPGFLPGTDQEYNGIIRRGAKLLYAYGEATVPKITVITRKAYGGAYCVMGSKDMGCDVNLAWPTAQIAVMGASGAVGFVYRQQLAEAAANGEDIDKLRLRLQQEYEDTLVNPYVAAERGYVDAVIPPSHTRGYIGTALRLLERKIAQLPPKKHGNVPL.

Residues 1–23 are disordered; the sequence is MTSVTDRSAHSAERSTEHTIDIH. The span at 7-21 shows a compositional bias: basic and acidic residues; that stretch reads RSAHSAERSTEHTID. The 257-residue stretch at 25 to 281 folds into the CoA carboxyltransferase N-terminal domain; that stretch reads TAGKLAELHK…NNSTDAPRYQ (257 aa). Residues 295–541 enclose the CoA carboxyltransferase C-terminal domain; the sequence is DEDLELDTLI…ERKIAQLPPK (247 aa).

Belongs to the AccD/PCCB family. As to quaternary structure, the biotin-dependent acyl-CoA carboxylase complex is composed of AccA3, which contains the biotin carboxylase (BC) and biotin carboxyl carrier protein (BCCP) domains, and AccD5, which contains the carboxyl transferase (CT) domain.

The enzyme catalyses N(6)-carboxybiotinyl-L-lysyl-[protein] + acetyl-CoA = N(6)-biotinyl-L-lysyl-[protein] + malonyl-CoA. It catalyses the reaction N(6)-carboxybiotinyl-L-lysyl-[protein] + propanoyl-CoA = methylmalonyl-CoA + N(6)-biotinyl-L-lysyl-[protein]. The protein operates within lipid metabolism; mycolic acid biosynthesis. Component of a biotin-dependent acyl-CoA carboxylase complex. This subunit transfers the CO2 from carboxybiotin to the CoA ester substrate. When associated with the alpha3 subunit AccA3, is involved in the carboxylation of acetyl-CoA and propionyl-CoA. The polypeptide is Biotin-dependent acetyl-/propionyl-coenzyme A carboxylase beta5 subunit (accD5) (Mycobacterium tuberculosis (strain CDC 1551 / Oshkosh)).